Reading from the N-terminus, the 185-residue chain is Elongation factor P (185 aa).

It belongs to the elongation factor P family.

It is found in the cytoplasm. Its pathway is protein biosynthesis; polypeptide chain elongation. In terms of biological role, involved in peptide bond synthesis. Stimulates efficient translation and peptide-bond synthesis on native or reconstituted 70S ribosomes in vitro. Probably functions indirectly by altering the affinity of the ribosome for aminoacyl-tRNA, thus increasing their reactivity as acceptors for peptidyl transferase. This is Elongation factor P from Nitratidesulfovibrio vulgaris (strain DSM 19637 / Miyazaki F) (Desulfovibrio vulgaris).